The sequence spans 1311 residues: MADRRVGKRQMGQRGFSKVESGTCNVCSAPCSSCMHRNVGFTGSKLDESSDENCHGVVGSQCSVNEDDLLPSSMVNAHKSLNNTASEASNLVNSSHDALSENAESKETIRCSGISDDSGAAAMTSKPSLSGSRMKHKVSASANMLDQSSNCIEDQEDGILSADRAKQLKSGCSNNEIGNKDLADGSALNSDPIPGGSRKDEVKLESLQNPSSNHDDRVSSEKGNFKEKSRPGGNKERQEPSVEGSTRSGENRKDGKSSKSSSSNSSAVSESESDDSEMVEHDVKVCDICGDAGREDLLAICSGCSDGAEHTYCMREMLDEVPEGDWLCEECAEEAEKQKQEAKRKRETEVTFNTYSSGKRHADKIEAAPDAKRQVVEASTGSPKKSILPRVGALSRETSFKGLDRLRGKLNHQTSFSDDTESARSAGSQLQPPKGAFLKSSSFNCSSSKPKVQLMDDAIHPRQKTGKEDTALDLKVGGFRNVGKSMPSRTTDAGNSGGSDSQAKMLGSKVYHSQEGKSLKQVKDRNREANASASSIDQKLKSRGNSSVSHANNNRDLKGLQSDGKRGNLTKQVSNLSRNRLENSVVSGGDISTNEKCSASEQSSSQADCKDELPSTSCTGEGMPNHGTVALQDGLPRSRVPREVGKKSKEAFSKRQRSSLLAGAKGLPSSQKGGQTAESSDTSGVSDSDLSTTKNVKEDLNKGNRLRAAVDAALRKKPSFGKNRVLEQSDASLVANVDSSSEKTLRNQLPSKMHKNHVSHEGLQGGHPILWPTSDPYKQTIVTNEKQLIFPGADTIPSRLVEPEVSFPAVKPVMRDLPLVPSPVMLRSSAIPDHEFIWQGDLEVRKIINQSAMHSGIQAHLSTLASPRVAEVVNKFPETFSLNEVPRKSTWPTQFEKLGTKEAHIALFFFAKDTESYERNYKPLVDNMIKNDLALKGNLDNVDLLIFASNQLPSNCQRWNMLYFLWGVFQGRKETNPQKNTSLPTSNVLPRDRDPKELCQTSSPSKHLEKGSSLRESSSNGIETRNGTDARSHENPNNRESSIERSPSKKEDIALKVEEAGVNHIPPQVTGSNSGDSLVRKVQKVEEQELGGRKDLPLTVMGSGIQSHGQDNPLEKDLNSSQASHRKRPLWELSNPANENSSAINQKVELNNDGLCEGSPNKKLKTENGSSSLCRDTSGHDSGIMKKSPKVVFPLDLNDDSEMVDNLSPLGNDENNNNRRLISGTVPNLELALGAEETTEATMGLLPFLSRSSNSGEQSNNSMNKEKQKADEEEEDDAEVAASLSLSLSFPGTEERKNVNTPLFLFRDLPR.

Disordered stretches follow at residues 1-21 (MADR…KVES), 114-141 (ISDD…VSAS), and 178-280 (GNKD…EMVE). Over residues 213 to 240 (NHDDRVSSEKGNFKEKSRPGGNKERQEP) the composition is skewed to basic and acidic residues. Over residues 258 to 270 (SKSSSSNSSAVSE) the composition is skewed to low complexity. The PHD-type zinc-finger motif lies at 283 to 334 (VKVCDICGDAGREDLLAICSGCSDGAEHTYCMREMLDEVPEGDWLCEECAEE). Zn(2+) is bound by residues Cys286, Cys289, Cys301, Cys304, His310, Cys313, Cys328, and Cys331. Positions 328 to 348 (CEECAEEAEKQKQEAKRKRET) form a coiled coil. Disordered regions lie at residues 369–390 (PDAK…ILPR), 411–440 (NHQT…FLKS), 460–701 (HPRQ…EDLN), 975–1050 (TNPQ…PSKK), 1059–1078 (EAGV…GDSL), 1087–1138 (EQEL…NPAN), 1152–1186 (NDGL…GIMK), and 1249–1311 (LSRS…DLPR). Residues 411 to 431 (NHQTSFSDDTESARSAGSQLQ) show a composition bias toward polar residues. Over residues 460 to 472 (HPRQKTGKEDTAL) the composition is skewed to basic and acidic residues. The span at 487–502 (PSRTTDAGNSGGSDSQ) shows a compositional bias: polar residues. Residues 512 to 528 (HSQEGKSLKQVKDRNRE) are compositionally biased toward basic and acidic residues. A compositionally biased stretch (polar residues) spans 529 to 552 (ANASASSIDQKLKSRGNSSVSHAN). Residues 553–566 (NNRDLKGLQSDGKR) are compositionally biased toward basic and acidic residues. Positions 569–607 (LTKQVSNLSRNRLENSVVSGGDISTNEKCSASEQSSSQA) are enriched in polar residues. Over residues 640–653 (VPREVGKKSKEAFS) the composition is skewed to basic and acidic residues. 3 stretches are compositionally biased toward polar residues: residues 668–694 (PSSQ…STTK), 977–988 (PQKNTSLPTSNV), and 1014–1025 (LRESSSNGIETR). Residues 1026–1050 (NGTDARSHENPNNRESSIERSPSKK) are compositionally biased toward basic and acidic residues. Positions 1087-1096 (EQELGGRKDL) are enriched in basic and acidic residues. The segment covering 1250–1263 (SRSSNSGEQSNNSM) has biased composition (polar residues). Positions 1256–1276 (GEQSNNSMNKEKQKADEEEED) form a coiled coil. Low complexity predominate over residues 1280-1289 (VAASLSLSLS).

In terms of assembly, part of the BAH-PHD bivalent histone reader complex that contains AIPP2, PAIPP2 and AIPP3/BDT1; the BAH-PHD module associates with CPL2 to form the BAH-PHD-CPL2 complex (BPC) for transcriptional repression. Binds directly to AIPP3/BDT1 and CPL2, but not to AIPP2. As to expression, expressed ubiquitously.

In terms of biological role, together with AIPP2 and AIPP3/BDT1, cooperates to form a BAH-PHD bivalent histone reader complex able to read histone H3 lysine 27 trimethylation (H3K27me3) and low-methylated H3K4 histone marks in order to regulate transcription, especially to prevent early flowering; promotes AIPP3/BDT1 binding to H3K27me3. CPL2 is subsequently recruited to form a BAH-PHD-CPL2 complex (BPC) in order to silence several H3K27me3 and low-methylated H3K4 enriched loci, including AGO5, via the phosphorylation state-dependent inhibition of Pol II release from the transcriptional start site (e.g. Ser5P-Pol II dephosphorylation). The BPC complex represses flowering by inhibiting the expression of several genes, including AGL6, FT, FUL and SOC1. The protein is Protein PARALOG OF AIPP2 of Arabidopsis thaliana (Mouse-ear cress).